We begin with the raw amino-acid sequence, 229 residues long: Large ribosomal subunit protein uL1 (229 aa).

It belongs to the universal ribosomal protein uL1 family. Part of the 50S ribosomal subunit.

Binds directly to 23S rRNA. The L1 stalk is quite mobile in the ribosome, and is involved in E site tRNA release. Its function is as follows. Protein L1 is also a translational repressor protein, it controls the translation of the L11 operon by binding to its mRNA. This chain is Large ribosomal subunit protein uL1, found in Magnetococcus marinus (strain ATCC BAA-1437 / JCM 17883 / MC-1).